The following is a 265-amino-acid chain: Imidazole glycerol phosphate synthase subunit HisF (265 aa).

Catalysis depends on residues aspartate 17 and aspartate 136.

It belongs to the HisA/HisF family. In terms of assembly, heterodimer of HisH and HisF.

The protein localises to the cytoplasm. The catalysed reaction is 5-[(5-phospho-1-deoxy-D-ribulos-1-ylimino)methylamino]-1-(5-phospho-beta-D-ribosyl)imidazole-4-carboxamide + L-glutamine = D-erythro-1-(imidazol-4-yl)glycerol 3-phosphate + 5-amino-1-(5-phospho-beta-D-ribosyl)imidazole-4-carboxamide + L-glutamate + H(+). It participates in amino-acid biosynthesis; L-histidine biosynthesis; L-histidine from 5-phospho-alpha-D-ribose 1-diphosphate: step 5/9. IGPS catalyzes the conversion of PRFAR and glutamine to IGP, AICAR and glutamate. The HisF subunit catalyzes the cyclization activity that produces IGP and AICAR from PRFAR using the ammonia provided by the HisH subunit. The polypeptide is Imidazole glycerol phosphate synthase subunit HisF (Mycobacterium avium (strain 104)).